Reading from the N-terminus, the 153-residue chain is Interleukin-17A (153 aa).

The N-terminal stretch at 1 to 23 is a signal peptide; sequence MASMRTSSMSLLLLLSLVALVKA. The N-linked (GlcNAc...) asparagine glycan is linked to Asn53. The interval 56–76 is disordered; it reads TNSRRPTDYHKRSTSPWTLHR. 2 disulfide bridges follow: Cys92/Cys142 and Cys97/Cys144.

This sequence belongs to the IL-17 family. As to quaternary structure, homodimer. Forms complexes with IL17RA and IL17RC receptors with 2:1 binding stoichiometry: two receptor chains for one interleukin molecule. IL17A homodimer preferentially drives the formation of IL17RA-IL17RC heterodimeric receptor complex. IL17A homodimer adopts an asymmetrical ternary structure with one IL17RA molecule, allowing for high affinity interactions of one IL17A monomer with one IL17RA molecule (via D1 and D2 domains), while disfavoring binding of a second IL17RA molecule on the other IL17A monomer. Heterodimer with IL17F. IL17A-IL17F forms complexes with IL17RA-IL17RC, but with lower affinity when compared to IL17A homodimer. IL17RA and IL17RC chains cannot distinguish between IL17A and IL17F molecules, potentially enabling the formation of topologically distinct complexes.

The protein resides in the secreted. Functionally, effector cytokine of innate and adaptive immune system involved in antimicrobial host defense and maintenance of tissue integrity. Signals via IL17RA-IL17RC heterodimeric receptor complex, triggering homotypic interaction of IL17RA and IL17RC chains with TRAF3IP2 adapter. This leads to downstream TRAF6-mediated activation of NF-kappa-B and MAPkinase pathways ultimately resulting in transcriptional activation of cytokines, chemokines, antimicrobial peptides and matrix metalloproteinases, with potential strong immune inflammation. Plays an important role in connecting T cell-mediated adaptive immunity and acute inflammatory response to destroy extracellular bacteria and fungi. As a signature effector cytokine of T-helper 17 cells (Th17), primarily induces neutrophil activation and recruitment at infection and inflammatory sites. In airway epithelium, mediates neutrophil chemotaxis via induction of CXCL1 and CXCL5 chemokines. In secondary lymphoid organs, contributes to germinal center formation by regulating the chemotactic response of B cells to CXCL12 and CXCL13, enhancing retention of B cells within the germinal centers, B cell somatic hypermutation rate and selection toward plasma cells. Effector cytokine of a subset of gamma-delta T cells that functions as part of an inflammatory circuit downstream IL1B, TLR2 and IL23A-IL12B to promote neutrophil recruitment for efficient bacterial clearance. Effector cytokine of innate immune cells including invariant natural killer cell (iNKT) and group 3 innate lymphoid cells that mediate initial neutrophilic inflammation. Involved in the maintenance of the integrity of epithelial barriers during homeostasis and pathogen infection. Upon acute injury, has a direct role in epithelial barrier formation by regulating OCLN localization and tight junction biogenesis. As part of the mucosal immune response induced by commensal bacteria, enhances host's ability to resist pathogenic bacterial and fungal infections by promoting neutrophil recruitment and antimicrobial peptides release. In synergy with IL17F, mediates the production of antimicrobial beta-defensins DEFB1, DEFB103A, and DEFB104A by mucosal epithelial cells, limiting the entry of microbes through the epithelial barriers. Involved in antiviral host defense through various mechanisms. Enhances immunity against West Nile virus by promoting T cell cytotoxicity. May play a beneficial role in influenza A virus (H5N1) infection by enhancing B cell recruitment and immune response in the lung. Contributes to influenza A virus (H1N1) clearance by driving the differentiation of B-1a B cells, providing for production of virus-specific IgM antibodies at first line of host defense. The protein is Interleukin-17A (IL17A) of Bos taurus (Bovine).